The primary structure comprises 179 residues: Large ribosomal subunit protein uL5 (179 aa).

Belongs to the universal ribosomal protein uL5 family. Part of the 50S ribosomal subunit; part of the 5S rRNA/L5/L18/L25 subcomplex. Contacts the 5S rRNA and the P site tRNA. Forms a bridge to the 30S subunit in the 70S ribosome.

This is one of the proteins that bind and probably mediate the attachment of the 5S RNA into the large ribosomal subunit, where it forms part of the central protuberance. In the 70S ribosome it contacts protein S13 of the 30S subunit (bridge B1b), connecting the 2 subunits; this bridge is implicated in subunit movement. Contacts the P site tRNA; the 5S rRNA and some of its associated proteins might help stabilize positioning of ribosome-bound tRNAs. This is Large ribosomal subunit protein uL5 from Natranaerobius thermophilus (strain ATCC BAA-1301 / DSM 18059 / JW/NM-WN-LF).